The following is a 228-amino-acid chain: Ribonuclease H (228 aa).

Positions 2-142 (GPMRTIVYAD…ADRLATLGRR (141 aa)) constitute an RNase H type-1 domain. Positions 11, 49, 71, and 134 each coordinate Mg(2+).

It belongs to the RNase H family. As to quaternary structure, monomer. The cofactor is Mg(2+).

The protein localises to the cytoplasm. The catalysed reaction is Endonucleolytic cleavage to 5'-phosphomonoester.. Its function is as follows. Endonuclease that specifically degrades the RNA of RNA-DNA hybrids. This is Ribonuclease H from Methylorubrum extorquens (strain PA1) (Methylobacterium extorquens).